A 563-amino-acid polypeptide reads, in one-letter code: Kelch repeat and BTB domain-containing protein 1 (563 aa).

Residues 21 to 88 (CDINIVINDE…IYGIPLSLTN (68 aa)) form the BTB domain. One can recognise a BACK domain in the interval 123–219 (CIDFYIYADK…SLLSPQVIKS (97 aa)). Kelch repeat units lie at residues 252 to 297 (IELI…VMDN), 298 to 346 (IIYM…VDDE), 347 to 395 (YIYC…MLNG), 397 to 441 (IYVI…VHAG), 442 to 492 (KIYI…SVHN), and 494 to 540 (LYVG…PIKH).

As to quaternary structure, interacts (via BTB domain) with host CUL3.

It localises to the host cytoplasm. Its function is as follows. Probable substrate-specific adapter of CUL3-containing E3 ubiquitin-protein ligases which mediate the ubiquitination and subsequent proteasomal degradation of host target proteins. This is Kelch repeat and BTB domain-containing protein 1 (KBTB1) from Mus musculus (Mouse).